Here is a 264-residue protein sequence, read N- to C-terminus: Acyl-[acyl-carrier-protein]--UDP-N-acetylglucosamine O-acyltransferase (264 aa).

Belongs to the transferase hexapeptide repeat family. LpxA subfamily. Homotrimer.

It localises to the cytoplasm. It catalyses the reaction a (3R)-hydroxyacyl-[ACP] + UDP-N-acetyl-alpha-D-glucosamine = a UDP-3-O-[(3R)-3-hydroxyacyl]-N-acetyl-alpha-D-glucosamine + holo-[ACP]. It participates in glycolipid biosynthesis; lipid IV(A) biosynthesis; lipid IV(A) from (3R)-3-hydroxytetradecanoyl-[acyl-carrier-protein] and UDP-N-acetyl-alpha-D-glucosamine: step 1/6. Its function is as follows. Involved in the biosynthesis of lipid A, a phosphorylated glycolipid that anchors the lipopolysaccharide to the outer membrane of the cell. This is Acyl-[acyl-carrier-protein]--UDP-N-acetylglucosamine O-acyltransferase from Rickettsia rickettsii.